Here is a 365-residue protein sequence, read N- to C-terminus: UDP-N-acetylglucosamine--N-acetylmuramyl-(pentapeptide) pyrophosphoryl-undecaprenol N-acetylglucosamine transferase (365 aa).

UDP-N-acetyl-alpha-D-glucosamine is bound by residues 17-19 (TGG), Asn-129, Arg-167, Ser-194, Ile-250, 269-274 (ALTVSE), and Gln-295.

This sequence belongs to the glycosyltransferase 28 family. MurG subfamily.

Its subcellular location is the cell inner membrane. It catalyses the reaction di-trans,octa-cis-undecaprenyl diphospho-N-acetyl-alpha-D-muramoyl-L-alanyl-D-glutamyl-meso-2,6-diaminopimeloyl-D-alanyl-D-alanine + UDP-N-acetyl-alpha-D-glucosamine = di-trans,octa-cis-undecaprenyl diphospho-[N-acetyl-alpha-D-glucosaminyl-(1-&gt;4)]-N-acetyl-alpha-D-muramoyl-L-alanyl-D-glutamyl-meso-2,6-diaminopimeloyl-D-alanyl-D-alanine + UDP + H(+). Its pathway is cell wall biogenesis; peptidoglycan biosynthesis. In terms of biological role, cell wall formation. Catalyzes the transfer of a GlcNAc subunit on undecaprenyl-pyrophosphoryl-MurNAc-pentapeptide (lipid intermediate I) to form undecaprenyl-pyrophosphoryl-MurNAc-(pentapeptide)GlcNAc (lipid intermediate II). The polypeptide is UDP-N-acetylglucosamine--N-acetylmuramyl-(pentapeptide) pyrophosphoryl-undecaprenol N-acetylglucosamine transferase (Shewanella pealeana (strain ATCC 700345 / ANG-SQ1)).